The primary structure comprises 249 residues: MEELILGVVQGLTEFLPISSSGHLAIFTAIFNATPDVGYFAFLHLATFLAVLIFVKSEVFEIVNGISKKDKEYINLASKLVLSTIPAVIVGLCFGDFIESVFSSTFLIGVFLSITGILMLLSDKLNKNLKTIKSIPYLDALIVGIFQAFSVLPGISRSGTTLFAALFLGMKKEDAVKYSFLMSLPVTFGAGILELQKVAFSTEQIFGFFISFLTGLLGLYLVKKMVIGGKLKIFGYYCVLASFFVLMFL.

A run of 8 helical transmembrane segments spans residues 11-31, 35-55, 80-100, 101-121, 135-155, 180-200, 202-222, and 226-246; these read GLTE…TAIF, PDVG…LIFV, LVLS…FIES, VFSS…LMLL, IPYL…LPGI, FLMS…KVAF, TEQI…LYLV, and VIGG…FFVL.

This sequence belongs to the UppP family.

It localises to the cell membrane. It carries out the reaction di-trans,octa-cis-undecaprenyl diphosphate + H2O = di-trans,octa-cis-undecaprenyl phosphate + phosphate + H(+). In terms of biological role, catalyzes the dephosphorylation of undecaprenyl diphosphate (UPP). The polypeptide is Undecaprenyl-diphosphatase (Methanococcus maripaludis (strain C6 / ATCC BAA-1332)).